The sequence spans 536 residues: Arylsulfatase K (536 aa).

The first 24 residues, 1-24 (MIQKCIALSLFLFSALPEDNIVRA), serve as a signal peptide directing secretion. D42 and C82 together coordinate Ca(2+). C82 acts as the Nucleophile in catalysis. C82 bears the 3-oxoalanine (Cys) mark. K130 provides a ligand contact to substrate. The N-linked (GlcNAc...) asparagine glycan is linked to N195. H253 contacts substrate. The N-linked (GlcNAc...) asparagine glycan is linked to N264. The Ca(2+) site is built by D315 and H316. 3 N-linked (GlcNAc...) asparagine glycosylation sites follow: N377, N416, and N501.

This sequence belongs to the sulfatase family. Ca(2+) serves as cofactor. The conversion to 3-oxoalanine (also known as C-formylglycine, FGly), of a serine or cysteine residue in prokaryotes and of a cysteine residue in eukaryotes, is critical for catalytic activity.

The protein localises to the secreted. Its subcellular location is the lysosome. The enzyme catalyses an aryl sulfate + H2O = a phenol + sulfate + H(+). It carries out the reaction Hydrolysis of the 2-sulfate groups of the 2-O-sulfo-D-glucuronate residues of chondroitin sulfate, heparin and heparitin sulfate.. Its function is as follows. Catalyzes the hydrolysis of pseudosubstrates such as p-nitrocatechol sulfate and p-nitrophenyl sulfate. Catalyzes the hydrolysis of the 2-sulfate groups of the 2-O-sulfo-D-glucuronate residues of chondroitin sulfate, heparin and heparitin sulfate. Acts selectively on 2-sulfoglucuronate and lacks activity against 2-sulfoiduronate. The polypeptide is Arylsulfatase K (arsk) (Xenopus laevis (African clawed frog)).